The following is a 218-amino-acid chain: Thiopurine S-methyltransferase (218 aa).

Tryptophan 10, leucine 45, glutamate 66, and arginine 123 together coordinate S-adenosyl-L-methionine.

This sequence belongs to the class I-like SAM-binding methyltransferase superfamily. TPMT family.

It localises to the cytoplasm. The catalysed reaction is S-adenosyl-L-methionine + a thiopurine = S-adenosyl-L-homocysteine + a thiopurine S-methylether.. This is Thiopurine S-methyltransferase from Shewanella putrefaciens (strain CN-32 / ATCC BAA-453).